The primary structure comprises 138 residues: MNKFEVEILSPEGIVFKGATPSVSFPTTRGIITVLSGHINLITKLNSGEIIIEATDGTKKIIVSGGFIEIVNNNVNVVAEFAAHSDEISRQKIKQAIDHAKDMKNKRKEFVNMYAIESQLKKSAVDLKSGLEIKRKKI.

This sequence belongs to the ATPase epsilon chain family. F-type ATPases have 2 components, CF(1) - the catalytic core - and CF(0) - the membrane proton channel. CF(1) has five subunits: alpha(3), beta(3), gamma(1), delta(1), epsilon(1). CF(0) has three main subunits: a, b and c.

Its subcellular location is the cell inner membrane. Its function is as follows. Produces ATP from ADP in the presence of a proton gradient across the membrane. In Endomicrobium trichonymphae, this protein is ATP synthase epsilon chain.